A 209-amino-acid polypeptide reads, in one-letter code: Neurotrophin-4 (209 aa).

An N-terminal signal peptide occupies residues 1-21; sequence MLPRHSCSLLLFLFLLPSVPM. The propeptide occupies 22 to 79; sequence EPHPPSSTLPPFLAPEWDLLSPRVALSRGAPAGPPLLFLLEAGAYGEPAGAPANRSRR. N75 is a glycosylation site (N-linked (GlcNAc...) asparagine). 3 disulfide bridges follow: C96/C169, C140/C198, and C157/C200.

It belongs to the NGF-beta family.

It localises to the secreted. Target-derived survival factor for peripheral sensory sympathetic neurons. May promote ameloblast differentiation and subsequent reduction in proliferation of ameloblasts. The sequence is that of Neurotrophin-4 (Ntf4) from Mus musculus (Mouse).